We begin with the raw amino-acid sequence, 330 residues long: CRISPR-associated endonuclease Cas1 (330 aa).

Positions 154, 222, and 237 each coordinate Mn(2+).

Belongs to the CRISPR-associated endonuclease Cas1 family. Homodimer, forms a heterotetramer with a Cas2 homodimer. The cofactor is Mg(2+). Mn(2+) is required as a cofactor.

In terms of biological role, CRISPR (clustered regularly interspaced short palindromic repeat), is an adaptive immune system that provides protection against mobile genetic elements (viruses, transposable elements and conjugative plasmids). CRISPR clusters contain spacers, sequences complementary to antecedent mobile elements, and target invading nucleic acids. CRISPR clusters are transcribed and processed into CRISPR RNA (crRNA). Acts as a dsDNA endonuclease. Involved in the integration of spacer DNA into the CRISPR cassette. The protein is CRISPR-associated endonuclease Cas1 of Clostridium perfringens (strain SM101 / Type A).